A 274-amino-acid polypeptide reads, in one-letter code: Large ribosomal subunit protein uL2 (274 aa).

The segment at 223–256 (VVMNPVDHPHGGGEGKTGEGRHPVDPWGNLTKGY) is disordered. Residues 229–246 (DHPHGGGEGKTGEGRHPV) are compositionally biased toward basic and acidic residues.

This sequence belongs to the universal ribosomal protein uL2 family. In terms of assembly, part of the 50S ribosomal subunit. Forms a bridge to the 30S subunit in the 70S ribosome.

Functionally, one of the primary rRNA binding proteins. Required for association of the 30S and 50S subunits to form the 70S ribosome, for tRNA binding and peptide bond formation. It has been suggested to have peptidyltransferase activity; this is somewhat controversial. Makes several contacts with the 16S rRNA in the 70S ribosome. The sequence is that of Large ribosomal subunit protein uL2 from Variovorax paradoxus (strain S110).